A 291-amino-acid polypeptide reads, in one-letter code: Homoserine kinase (291 aa).

Residue 80-90 coordinates ATP; it reads PLARGLGSSST.

It belongs to the GHMP kinase family. Homoserine kinase subfamily.

It is found in the cytoplasm. The enzyme catalyses L-homoserine + ATP = O-phospho-L-homoserine + ADP + H(+). The protein operates within amino-acid biosynthesis; L-threonine biosynthesis; L-threonine from L-aspartate: step 4/5. Its function is as follows. Catalyzes the ATP-dependent phosphorylation of L-homoserine to L-homoserine phosphate. The sequence is that of Homoserine kinase from Lactiplantibacillus plantarum (strain ATCC BAA-793 / NCIMB 8826 / WCFS1) (Lactobacillus plantarum).